We begin with the raw amino-acid sequence, 274 residues long: Urease accessory protein UreD (274 aa).

It belongs to the UreD family. In terms of assembly, ureD, UreF and UreG form a complex that acts as a GTP-hydrolysis-dependent molecular chaperone, activating the urease apoprotein by helping to assemble the nickel containing metallocenter of UreC. The UreE protein probably delivers the nickel.

The protein localises to the cytoplasm. In terms of biological role, required for maturation of urease via the functional incorporation of the urease nickel metallocenter. This Enterobacter sp. (strain 638) protein is Urease accessory protein UreD.